The sequence spans 396 residues: Elongation factor Tu (396 aa).

The region spanning 10-205 is the tr-type G domain; sequence KPHVNVGTIG…AVDEYIPTPE (196 aa). A G1 region spans residues 19 to 26; it reads GHVDHGKT. 19-26 contacts GTP; that stretch reads GHVDHGKT. Residue threonine 26 participates in Mg(2+) binding. The tract at residues 61–65 is G2; it reads GITIA. Residues 82–85 are G3; that stretch reads DCPG. GTP is bound by residues 82–86 and 137–140; these read DCPGH and NKTD. Positions 137–140 are G4; that stretch reads NKTD. Positions 175 to 177 are G5; sequence SAL.

The protein belongs to the TRAFAC class translation factor GTPase superfamily. Classic translation factor GTPase family. EF-Tu/EF-1A subfamily. As to quaternary structure, monomer.

The protein localises to the cytoplasm. The catalysed reaction is GTP + H2O = GDP + phosphate + H(+). GTP hydrolase that promotes the GTP-dependent binding of aminoacyl-tRNA to the A-site of ribosomes during protein biosynthesis. This chain is Elongation factor Tu, found in Salinibacter ruber (strain DSM 13855 / M31).